A 388-amino-acid polypeptide reads, in one-letter code: Ovalbumin-related protein Y (388 aa).

Cysteines 74 and 121 form a disulfide. Asn95, Asn215, Asn293, and Asn312 each carry an N-linked (GlcNAc...) asparagine glycan.

This sequence belongs to the serpin family. Ov-serpin subfamily. Post-translationally, N-glycosylated on at least two Asn residues by ovomucoid type carbohydrate units. In terms of processing, the N-terminus is blocked. In terms of tissue distribution, major protein of egg white. Expressed in the magnum of the oviduct (at protein level).

It is found in the secreted. This Gallus gallus (Chicken) protein is Ovalbumin-related protein Y (SERPINB14B).